The following is an 82-amino-acid chain: Acyl carrier protein (82 aa).

The 79-residue stretch at 3–81 folds into the Carrier domain; sequence SSEQEILAGL…DAVTYIAGAQ (79 aa). Residue Ser-41 is modified to O-(pantetheine 4'-phosphoryl)serine.

The protein belongs to the acyl carrier protein (ACP) family. In terms of processing, 4'-phosphopantetheine is transferred from CoA to a specific serine of apo-ACP by AcpS. This modification is essential for activity because fatty acids are bound in thioester linkage to the sulfhydryl of the prosthetic group.

The protein resides in the cytoplasm. It functions in the pathway lipid metabolism; fatty acid biosynthesis. In terms of biological role, carrier of the growing fatty acid chain in fatty acid biosynthesis. In Beutenbergia cavernae (strain ATCC BAA-8 / DSM 12333 / CCUG 43141 / JCM 11478 / NBRC 16432 / NCIMB 13614 / HKI 0122), this protein is Acyl carrier protein.